Reading from the N-terminus, the 250-residue chain is Precorrin-4 C(11)-methyltransferase (250 aa).

Belongs to the precorrin methyltransferase family.

It catalyses the reaction precorrin-4 + S-adenosyl-L-methionine = precorrin-5 + S-adenosyl-L-homocysteine. Its pathway is cofactor biosynthesis; adenosylcobalamin biosynthesis; cob(II)yrinate a,c-diamide from precorrin-2 (aerobic route): step 4/10. Functionally, catalyzes the methylation of C-11 in precorrin-4 to form precorrin-5. In Pseudomonas aeruginosa (strain ATCC 15692 / DSM 22644 / CIP 104116 / JCM 14847 / LMG 12228 / 1C / PRS 101 / PAO1), this protein is Precorrin-4 C(11)-methyltransferase (cobM).